An 861-amino-acid polypeptide reads, in one-letter code: Piwi-like protein 1 (861 aa).

Residues 1–13 (MTGRARARARGRA) show a composition bias toward basic residues. Residues 1–64 (MTGRARARAR…TAGGTAKSQG (64 aa)) form a disordered region. Arg14 bears the Omega-N-methylarginine; by PRMT5; alternate mark. Arg14 is modified (symmetric dimethylarginine; by PRMT5; alternate). A compositionally biased stretch (polar residues) spans 17–27 (ETAQLVGSTAS). Omega-N-methylarginine; by PRMT5 is present on Arg49. At Arg53 the chain carries Omega-N-methylarginine; alternate. At Arg53 the chain carries Symmetric dimethylarginine; alternate. Residues 217-224 (RRLLKIMN) carry the D-box motif. Residues 278 to 391 (TVLDFMFNFY…LIPELCYLTG (114 aa)) enclose the PAZ domain. The interval 316–318 (TYR) is required for binding 2'-O-methylated 3'-end of piRNAs. Omega-N-methylarginine; by PRMT5 is present on Arg370. The tract at residues 479 to 615 (SKETRGAPLI…LQMNCKMGGE (137 aa)) is MID region. Residues 555–847 (IVVCLLSSNR…LAFLVGQSIH (293 aa)) enclose the Piwi domain. Catalysis depends on residues Asp632, Glu670, Asp702, and His836.

The protein belongs to the argonaute family. Piwi subfamily. As to quaternary structure, interacts (via Piwi domain) with DICER1, suggesting that it forms ribonucleoprotein RISC complexes; this interaction is regulated by HSP90AB1 activity. Interacts with MAEL, KIF17, PABPC1, PRMT5 and WDR77. Interacts (when methylated on arginine residues) with TDRD1, TDRKH/TDRD2, RNF17/TDRD4, TDRD6, TDRD7 and TDRD9. Interacts with CLOCK. Interacts with MOV10L1. Interacts with ANAPC10; interaction oly takes place following piRNA-binding. Interacts with RNF8; leading to sequester RNF8 in the cytoplasm. Interacts with TEX19. Mg(2+) serves as cofactor. Post-translationally, arginine methylation by PRMT5 is required for the interaction with Tudor domain-containing protein (TDRD1, TDRKH/TDRD2, RNF17/TDRD4, TDRD6, TDRD7 and TDRD9) and subsequent localization to the meiotic nuage, also named P granule. In terms of processing, ubiquitinated by the anaphase promoting complex/cyclosome (APC/C) in late spermatids, leading to its degradation. Ubiquitination only takes place following piRNA-binding in adult testis. Ubiquitination and degradation in late spermatogenesis by APC/C is probably required to release RNF8 from the cytoplasm and promote histone to protamine exchange by RNF8. Expressed in spermatocytes and spermatids. Also detected in prostate cancer (at protein level). Detected in most fetal and adult tissues. Expressed in testes, specifically in germline cells; detected in spermatocytes and spermatids during spermatogenesis. Increased expression in testicular tumors originating from embryonic germ cells with retention of germ cells phenotype. No expression in testicular tumors of somatic origin, such as Sertoli cell and Leydig cell tumors. Overexpressed in gastric cancer cells. Isoform 3: Ubiquitously expressed, and specifically in CD34(+) hematopoietic progenitor cells but not in more differentiated cells.

The protein localises to the cytoplasm. Endoribonuclease that plays a central role in postnatal germ cells by repressing transposable elements and preventing their mobilization, which is essential for the germline integrity. Acts via the piRNA metabolic process, which mediates the repression of transposable elements during meiosis by forming complexes composed of piRNAs and Piwi proteins and governs the methylation and subsequent repression of transposons. Directly binds methylated piRNAs, a class of 24 to 30 nucleotide RNAs that are generated by a Dicer-independent mechanism and are primarily derived from transposons and other repeated sequence elements. Strongly prefers a uridine in the first position of their guide (g1U preference, also named 1U-bias). Not involved in the piRNA amplification loop, also named ping-pong amplification cycle. Acts as an endoribonuclease that cleaves transposon messenger RNAs. Besides their function in transposable elements repression, piRNAs are probably involved in other processes during meiosis such as translation regulation. Probable component of some RISC complex, which mediates RNA cleavage and translational silencing. Also plays a role in the formation of chromatoid bodies and is required for some miRNAs stability. Required to sequester RNF8 in the cytoplasm until late spermatogenesis; RNF8 being released upon ubiquitination and degradation of PIWIL1. In terms of biological role, may be a negative developmental regulator. This is Piwi-like protein 1 (PIWIL1) from Homo sapiens (Human).